We begin with the raw amino-acid sequence, 137 residues long: 1,4-dihydroxy-2-naphthoyl-CoA hydrolase (137 aa).

Residue Asp13 is part of the active site.

Belongs to the 4-hydroxybenzoyl-CoA thioesterase family. DHNA-CoA hydrolase subfamily.

It carries out the reaction 1,4-dihydroxy-2-naphthoyl-CoA + H2O = 1,4-dihydroxy-2-naphthoate + CoA + H(+). The protein operates within cofactor biosynthesis; phylloquinone biosynthesis. It participates in quinol/quinone metabolism; 1,4-dihydroxy-2-naphthoate biosynthesis; 1,4-dihydroxy-2-naphthoate from chorismate: step 7/7. Functionally, catalyzes the hydrolysis of 1,4-dihydroxy-2-naphthoyl-CoA (DHNA-CoA) to 1,4-dihydroxy-2-naphthoate (DHNA), a reaction involved in phylloquinone (vitamin K1) biosynthesis. In Crocosphaera subtropica (strain ATCC 51142 / BH68) (Cyanothece sp. (strain ATCC 51142)), this protein is 1,4-dihydroxy-2-naphthoyl-CoA hydrolase.